The primary structure comprises 325 residues: Beta-ketoacyl-[acyl-carrier-protein] synthase III (325 aa).

Active-site residues include Cys-114 and His-252. An ACP-binding region spans residues 253–257; the sequence is QANFR. Asn-282 is a catalytic residue.

It belongs to the thiolase-like superfamily. FabH family. Homodimer.

It localises to the cytoplasm. It catalyses the reaction malonyl-[ACP] + acetyl-CoA + H(+) = 3-oxobutanoyl-[ACP] + CO2 + CoA. It participates in lipid metabolism; fatty acid biosynthesis. In terms of biological role, catalyzes the condensation reaction of fatty acid synthesis by the addition to an acyl acceptor of two carbons from malonyl-ACP. Catalyzes the first condensation reaction which initiates fatty acid synthesis and may therefore play a role in governing the total rate of fatty acid production. Possesses both acetoacetyl-ACP synthase and acetyl transacylase activities. Its substrate specificity determines the biosynthesis of branched-chain and/or straight-chain of fatty acids. This is Beta-ketoacyl-[acyl-carrier-protein] synthase III from Novosphingobium aromaticivorans (strain ATCC 700278 / DSM 12444 / CCUG 56034 / CIP 105152 / NBRC 16084 / F199).